We begin with the raw amino-acid sequence, 1284 residues long: ABC multidrug transporter atrC (1284 aa).

The segment covering M1–P11 has biased composition (basic and acidic residues). The segment at M1 to E24 is disordered. The next 6 membrane-spanning stretches (helical) occupy residues A55–F75, A99–T119, I178–C198, T203–V223, L282–F302, and I320–Y340. Positions A55–R346 constitute an ABC transmembrane type-1 1 domain. Residues V381–I626 form the ABC transporter 1 domain. Residues N385 and N401 are each glycosylated (N-linked (GlcNAc...) asparagine). G416–S423 is an ATP binding site. Residues N488 and N632 are each glycosylated (N-linked (GlcNAc...) asparagine). The next 2 helical transmembrane spans lie at L705–M725 and F745–G765. The region spanning L705–K992 is the ABC transmembrane type-1 2 domain. N800 carries an N-linked (GlcNAc...) asparagine glycan. Transmembrane regions (helical) follow at residues I824–F844, W846–V866, M931–Y951, and L955–F975. N995 is a glycosylation site (N-linked (GlcNAc...) asparagine). In terms of domain architecture, ABC transporter 2 spans I1027 to A1280. G1062 to S1069 lines the ATP pocket. N-linked (GlcNAc...) asparagine glycosylation occurs at N1122.

It belongs to the ABC transporter superfamily. ABCB family. Multidrug resistance exporter (TC 3.A.1.201) subfamily.

It is found in the cell membrane. Pleiotropic ABC efflux transporter involved in the protection of the cells against a wide range of toxic compounds. This Emericella nidulans (Aspergillus nidulans) protein is ABC multidrug transporter atrC.